The sequence spans 585 residues: Probable multidrug resistance ABC transporter ATP-binding/permease protein YheI (585 aa).

The ABC transmembrane type-1 domain occupies 19-304; the sequence is YTIAIVLLLA…IGELINVMQR (286 aa). The next 6 membrane-spanning stretches (helical) occupy residues 21–41, 57–77, 127–147, 149–169, 249–269, and 279–299; these read IAIVLLLAVNVIEMFPPKLLG, LLFYIGIFFVLTAAVYIMSYF, AVSLTTGFGILTLVDSTMFMM, IFLTMGFLISWKLTFAAIIPL, VKLLVGASYLIGLGYGAFLVF, and VSFNVYLGMMIWPMFAIGELI. In terms of domain architecture, ABC transporter spans 337–572; the sequence is IVFSHVSFTY…NGWYREQYER (236 aa). 371–378 is an ATP binding site; sequence GKTGSGKT.

Belongs to the ABC transporter superfamily. As to quaternary structure, heterodimer composed of YheH and YheI.

The protein resides in the cell membrane. Inhibited by ortho-vanadate. Involved in the transport of four structurally unrelated drugs, including doxorubicin and mitoxantrone. Transmembrane domains (TMD) form a pore in the membrane and the ATP-binding domain (NBD) is responsible for energy generation. This chain is Probable multidrug resistance ABC transporter ATP-binding/permease protein YheI (yheI), found in Bacillus subtilis (strain 168).